Reading from the N-terminus, the 950-residue chain is Protocadherin alpha-13 (950 aa).

The N-terminal stretch at 1–29 (MLSSWQGGPRPRQLLLWLLILAAWETGSG) is a signal peptide. The Extracellular segment spans residues 30–697 (QLHYSVPEEA…GPEAALVDVN (668 aa)). Cadherin domains lie at 34–133 (SVPE…PPIF), 134–242 (PESK…APEF), 243–350 (YQSV…APEV), 351–455 (TITS…APAF), 456–565 (AQPE…APAL), and 581–678 (MPRS…APQA). N-linked (GlcNAc...) asparagine glycans are attached at residues asparagine 257 and asparagine 265. The N-linked (GlcNAc...) asparagine glycan is linked to asparagine 548. Residues 698–718 (VYLIIAICAVSSLLVLTLLLY) form a helical membrane-spanning segment. Residues 719–950 (TALRCSAPPT…GNSTTDNSDQ (232 aa)) lie on the Cytoplasmic side of the membrane. 6 PXXP repeats span residues 734–737 (PGKP), 774–777 (PSLP), 799–802 (PRQP), 832–835 (PGGP), 873–876 (PGNP), and 891–894 (PGSP). The tract at residues 734 to 894 (PGKPTLVCSS…PDKFIIPGSP (161 aa)) is 6 X 4 AA repeats of P-X-X-P. Disordered regions lie at residues 774–808 (PSLPPCLGSAEGTGQREEDSEGLKEPRQPNPDWRY) and 827–950 (ILRA…NSDQ). Basic and acidic residues predominate over residues 787–800 (GQREEDSEGLKEPR). The segment covering 909–923 (DKSDFITFGKKEETK) has biased composition (basic and acidic residues).

The protein resides in the cell membrane. Functionally, potential calcium-dependent cell-adhesion protein. May be involved in the establishment and maintenance of specific neuronal connections in the brain. The chain is Protocadherin alpha-13 (PCDHA13) from Pan troglodytes (Chimpanzee).